Here is a 202-residue protein sequence, read N- to C-terminus: FMN reductase (NADH) RutF (202 aa).

The span at 168–191 shows a compositional bias: low complexity; the sequence is PRAPRGGSAPAEPARGARAIGARP. The tract at residues 168 to 202 is disordered; it reads PRAPRGGSAPAEPARGARAIGARPPEGPVLALRSA.

This sequence belongs to the non-flavoprotein flavin reductase family. RutF subfamily.

It catalyses the reaction FMNH2 + NAD(+) = FMN + NADH + 2 H(+). Its function is as follows. Catalyzes the reduction of FMN to FMNH2 which is used to reduce pyrimidine by RutA via the Rut pathway. The protein is FMN reductase (NADH) RutF of Methylorubrum populi (strain ATCC BAA-705 / NCIMB 13946 / BJ001) (Methylobacterium populi).